We begin with the raw amino-acid sequence, 201 residues long: Small ribosomal subunit protein uS4c (201 aa).

The disordered stretch occupies residues 14–43 (RLGALPGLTSKRPRAGSDLRNQSRPGKKSQ). The 81-residue stretch at 89–169 (MRLDNILFRL…LPKHLTFHTL (81 aa)) folds into the S4 RNA-binding domain.

Belongs to the universal ribosomal protein uS4 family. As to quaternary structure, part of the 30S ribosomal subunit. Contacts protein S5. The interaction surface between S4 and S5 is involved in control of translational fidelity.

Its subcellular location is the plastid. It is found in the chloroplast. One of the primary rRNA binding proteins, it binds directly to 16S rRNA where it nucleates assembly of the body of the 30S subunit. Its function is as follows. With S5 and S12 plays an important role in translational accuracy. The chain is Small ribosomal subunit protein uS4c (rps4) from Gossypium hirsutum (Upland cotton).